A 176-amino-acid chain; its full sequence is ATP synthase subunit delta (176 aa).

The protein belongs to the ATPase delta chain family. F-type ATPases have 2 components, F(1) - the catalytic core - and F(0) - the membrane proton channel. F(1) has five subunits: alpha(3), beta(3), gamma(1), delta(1), epsilon(1). F(0) has three main subunits: a(1), b(2) and c(10-14). The alpha and beta chains form an alternating ring which encloses part of the gamma chain. F(1) is attached to F(0) by a central stalk formed by the gamma and epsilon chains, while a peripheral stalk is formed by the delta and b chains.

It is found in the cell inner membrane. In terms of biological role, f(1)F(0) ATP synthase produces ATP from ADP in the presence of a proton or sodium gradient. F-type ATPases consist of two structural domains, F(1) containing the extramembraneous catalytic core and F(0) containing the membrane proton channel, linked together by a central stalk and a peripheral stalk. During catalysis, ATP synthesis in the catalytic domain of F(1) is coupled via a rotary mechanism of the central stalk subunits to proton translocation. Its function is as follows. This protein is part of the stalk that links CF(0) to CF(1). It either transmits conformational changes from CF(0) to CF(1) or is implicated in proton conduction. This Campylobacter hominis (strain ATCC BAA-381 / DSM 21671 / CCUG 45161 / LMG 19568 / NCTC 13146 / CH001A) protein is ATP synthase subunit delta.